The following is a 122-amino-acid chain: Probable dihydroneopterin aldolase (122 aa).

Residues Glu-21, Tyr-54, and 73-74 (LE) contribute to the substrate site. The active-site Proton donor/acceptor is Lys-101.

The protein belongs to the DHNA family.

It carries out the reaction 7,8-dihydroneopterin = 6-hydroxymethyl-7,8-dihydropterin + glycolaldehyde. It participates in cofactor biosynthesis; tetrahydrofolate biosynthesis; 2-amino-4-hydroxy-6-hydroxymethyl-7,8-dihydropteridine diphosphate from 7,8-dihydroneopterin triphosphate: step 3/4. Catalyzes the conversion of 7,8-dihydroneopterin to 6-hydroxymethyl-7,8-dihydropterin. The protein is Probable dihydroneopterin aldolase (folB) of Chlamydia muridarum (strain MoPn / Nigg).